A 156-amino-acid polypeptide reads, in one-letter code: Small ribosomal subunit protein uS7 (156 aa).

The protein belongs to the universal ribosomal protein uS7 family. Part of the 30S ribosomal subunit. Contacts proteins S9 and S11.

One of the primary rRNA binding proteins, it binds directly to 16S rRNA where it nucleates assembly of the head domain of the 30S subunit. Is located at the subunit interface close to the decoding center, probably blocks exit of the E-site tRNA. In Ralstonia nicotianae (strain ATCC BAA-1114 / GMI1000) (Ralstonia solanacearum), this protein is Small ribosomal subunit protein uS7.